We begin with the raw amino-acid sequence, 261 residues long: Taurine import ATP-binding protein TauB (261 aa).

The ABC transporter domain maps to 4-233; the sequence is LQLEGIGAHY…RYSAGESARA (230 aa). Residue 38–45 coordinates ATP; that stretch reads GPSGSGKT.

Belongs to the ABC transporter superfamily. Taurine importer (TC 3.A.1.17.1) family. The complex is composed of two ATP-binding proteins (TauB), two transmembrane proteins (TauC) and a solute-binding protein (TauA).

The protein localises to the cell inner membrane. The enzyme catalyses taurine(out) + ATP + H2O = taurine(in) + ADP + phosphate + H(+). Its function is as follows. Part of the ABC transporter complex TauABC involved in taurine import. Responsible for energy coupling to the transport system. The sequence is that of Taurine import ATP-binding protein TauB from Pseudomonas syringae pv. tomato (strain ATCC BAA-871 / DC3000).